The following is a 790-amino-acid chain: Solute carrier family 26 member 9 (790 aa).

At 1–70 (MNQPRPRYVV…WLPKYKIKDY (70 aa)) the chain is on the cytoplasmic side. The helical transmembrane segment at 71 to 96 (IIPDLLGGLSGGCIQVPQGMAFALLA) threads the bilayer. Topologically, residues 97–100 (NLPA) are extracellular. The chain crosses the membrane as a helical span at residues 101-109 (VNGLYSSFF). The Cytoplasmic portion of the chain corresponds to 110-129 (PLLTYFFLGGIHQMVPGTFA). Residues 130–142 (VISILVGNICLQL) form a helical membrane-spanning segment. Residues 143–162 (APESKFQIFNNVTNETYVDT) lie on the Extracellular side of the membrane. The helical transmembrane segment at 163-191 (AAMEAERLHVSATLACLTAVIQMALGFMQ) threads the bilayer. Over 192 to 201 (FGFVAIYLSE) the chain is Cytoplasmic. The chain crosses the membrane as a helical span at residues 202-224 (SFIRGFMTAAGLQILISVLKYIF). The Extracellular segment spans residues 225–237 (GLTIPSYTGPGSI). The segment at residues 238–246 (VFTFIDICK) is an intramembrane region (helical). Residues 247-254 (NLPHTNIA) lie on the Extracellular side of the membrane. Residues 255-275 (SLIFALVSGVFLVLVKELNAR) form a helical membrane-spanning segment. Over 276 to 286 (YMHKIHFPIPT) the chain is Cytoplasmic. A helical membrane pass occupies residues 287-299 (EMIVVVVATAISG). The Extracellular segment spans residues 300 to 334 (SCKMPKKYHMQIVGEIRQGFPTPVAPMVSQWKGMV). Residues 335-358 (GTAFSLAIVGYVINLAMGRTLASK) traverse the membrane as a helical segment. Topologically, residues 359–365 (HGYDVDS) are cytoplasmic. The helical transmembrane segment at 366–379 (NQEMIALGCSNFFG) threads the bilayer. The Extracellular portion of the chain corresponds to 380-390 (SFFKIHVICCA). Residues 391-400 (LSVTLAVDGA) form a helical membrane-spanning segment. The Cytoplasmic segment spans residues 401-405 (GGKSQ). Residues 406–419 (VASLCVSLVVMITM) form a helical membrane-spanning segment. Over 420 to 431 (LVLGSYLYPLPK) the chain is Extracellular. The chain crosses the membrane as a helical span at residues 432-457 (AVLGALIAVNLKNSLKQLTDPYYLWR). Residues 458-461 (KSKL) lie on the Cytoplasmic side of the membrane. A helical membrane pass occupies residues 462 to 476 (DCCVWVVSFLSSFFL). The Extracellular segment spans residues 477–479 (SLP). The chain crosses the membrane as a helical span at residues 480–498 (YGVAVGVAFSILVVIFQTQ). Over 499–790 (FRNGSTLAQV…MFHTETLTAL (292 aa)) the chain is Cytoplasmic. The 219-residue stretch at 519 to 737 (TYNRAQEIAG…PSIHDAVLFA (219 aa)) folds into the STAS domain.

Belongs to the SLC26A/SulP transporter (TC 2.A.53) family. Homodimer. In terms of tissue distribution, expressed in stomach and trachea. Abundantly expressed in the apical domain of the surface epithelial cells and the deep cells in the gastric gland. Also expressed in heart, brain, lung and liver.

It is found in the cell membrane. The protein localises to the endomembrane system. It catalyses the reaction chloride(in) = chloride(out). The enzyme catalyses hydrogencarbonate(in) + chloride(out) = hydrogencarbonate(out) + chloride(in). Its activity is regulated as follows. Inhibited by ammonium and thiosulfate. Its function is as follows. Ion transporter that can act both as an ion channel and anion exchanger. Mainly acts as a chloride channel, which mediate uncoupled chloride anion transport in an alternate-access mechanism where a saturable binding site is alternately exposed to either one or the other side of the membrane. Also acts as a DIDS- and thiosulfate- sensitive anion exchanger the exchange of chloride for bicarbonate ions across the cell membrane. The protein is Solute carrier family 26 member 9 of Mus musculus (Mouse).